The chain runs to 75 residues: Caerin-1.1 (75 aa).

The signal sequence occupies residues 1–22 (MASLKKSLFLVLLLGFVSVSIC). A propeptide spanning residues 23–49 (EEEKRQEDEDEHEEEGESQEEGSEEKR) is cleaved from the precursor. A disordered region spans residues 24 to 49 (EEKRQEDEDEHEEEGESQEEGSEEKR). Over residues 30–45 (DEDEHEEEGESQEEGS) the composition is skewed to acidic residues. L74 carries the leucine amide modification.

It belongs to the frog skin active peptide (FSAP) family. Caerin subfamily. The major product is Caerin-1.1; in addition, different peptides are produced that are missing some amino acid residues at the N-terminus or C-terminus. Caerin-1.1.1 and Caerin-1.1.4 are inactive. Expressed by the skin parotoid and/or rostral glands.

The protein resides in the secreted. Antimicrobial peptide with antibacterial and antiviral activities. Adopts an alpha helical conformation which can disrupt bacterial membranes. Inhibits the formation of NO by neuronal nitric oxide synthase (nNOS) at micromolar concentrations. Acts by a non-competitive mechanism, probably by binding to calcium/calmodulin and as a consequence blocking calmodulin attachment to nNOS. Functionally, is inactive. This chain is Caerin-1.1, found in Ranoidea caerulea (Green tree frog).